Consider the following 389-residue polypeptide: Dual-specificity RNA methyltransferase RlmN (389 aa).

The active-site Proton acceptor is the Glu94. The Radical SAM core domain maps to 134-367; that stretch reads PRVRVTQCIS…CFVRRRRGDD (234 aa). Cysteines 141 and 372 form a disulfide. Positions 148, 152, and 155 each coordinate [4Fe-4S] cluster. S-adenosyl-L-methionine contacts are provided by residues 197-198, Ser229, 253-255, and Asn329; these read GE and SLH. Catalysis depends on Cys372, which acts as the S-methylcysteine intermediate.

This sequence belongs to the radical SAM superfamily. RlmN family. Requires [4Fe-4S] cluster as cofactor.

It is found in the cytoplasm. It carries out the reaction adenosine(2503) in 23S rRNA + 2 reduced [2Fe-2S]-[ferredoxin] + 2 S-adenosyl-L-methionine = 2-methyladenosine(2503) in 23S rRNA + 5'-deoxyadenosine + L-methionine + 2 oxidized [2Fe-2S]-[ferredoxin] + S-adenosyl-L-homocysteine. The enzyme catalyses adenosine(37) in tRNA + 2 reduced [2Fe-2S]-[ferredoxin] + 2 S-adenosyl-L-methionine = 2-methyladenosine(37) in tRNA + 5'-deoxyadenosine + L-methionine + 2 oxidized [2Fe-2S]-[ferredoxin] + S-adenosyl-L-homocysteine. Its function is as follows. Specifically methylates position 2 of adenine 2503 in 23S rRNA and position 2 of adenine 37 in tRNAs. m2A2503 modification seems to play a crucial role in the proofreading step occurring at the peptidyl transferase center and thus would serve to optimize ribosomal fidelity. The polypeptide is Dual-specificity RNA methyltransferase RlmN (Sorangium cellulosum (strain So ce56) (Polyangium cellulosum (strain So ce56))).